Here is a 2507-residue protein sequence, read N- to C-terminus: Putative neurobeachin homolog (2507 aa).

Disordered stretches follow at residues 1–109, 1307–1377, and 1629–1649; these read MEIS…PPLP, PSSP…DGGR, and SRHE…EISE. A compositionally biased stretch (acidic residues) spans 24–37; sequence PVEEGEEVNDEESN. The segment covering 1317 to 1340 has biased composition (polar residues); it reads TTQKQENSENVNSETSPENGSNGK. Residues 1360 to 1372 are compositionally biased toward acidic residues; it reads DGEEEENGEEGQG. Positions 1690-1798 constitute a BEACH-type PH domain; the sequence is PSSQSACFST…AVKKVVYQLP (109 aa). One can recognise a BEACH domain in the interval 1817-2106; it reads MTPRQLFKHS…QLLTEAHPPR (290 aa). WD repeat units lie at residues 2265–2308, 2326–2365, 2405–2444, and 2447–2486; these read GHGD…GFIA, GHEA…LRRI, LVDD…KLYT, and PLNS…WHYE.

Belongs to the WD repeat neurobeachin family. As to quaternary structure, interacts with RII subunit of PKA. In terms of tissue distribution, expressed in vulval precursor cells and rectal epithelia in L2 and L3 larvae. In L4 larvae, expression is seen in intestinal epithelial cells.

It is found in the cytoplasm. Its subcellular location is the membrane. It localises to the nucleus. Functionally, binds to type II regulatory subunits of protein kinase A and anchors/targets them to the membrane. May anchor the kinase to cytoskeletal and/or organelle-associated proteins. Regulates endosomal traffic in polarized epithelial cells such as the vulval precursor cells and intestinal cells. Thought to act as a negative regulator of lin-12 activity in vulval precursor cells. May have a role in the internalization process from basolateral surface of polarized epithelial cells. The protein is Putative neurobeachin homolog (sel-2) of Caenorhabditis elegans.